A 598-amino-acid polypeptide reads, in one-letter code: Arylsulfate sulfotransferase AssT (598 aa).

Positions 1 to 27 (MFDKYRKTLVAGTVAITLGLSASGVMA) are cleaved as a signal peptide. Positions 279 and 383 each coordinate 4-methylumbelliferone. Cys-445 and Cys-451 form a disulfide bridge. His-463 serves as a coordination point for 4-methylumbelliferone. The active-site Nucleophile; sulfurylated histidine covalent intermediate is the His-463.

It belongs to the aryl sulfotransferase family. Homodimer. Post-translationally, the disulfide bond is crucial for enzyme activity.

The protein localises to the periplasm. It catalyses the reaction an aryl sulfate + a phenol = an aryl sulfate + a phenol. It carries out the reaction 4-methylumbelliferone sulfate + phenol = phenyl sulfate + 4-methylumbelliferone. In terms of biological role, catalyzes the transfer of a sulfate group from a phenyl sulfate ester to other phenolic compounds. In vitro, is able to use 4-methylumbelliferyl sulfate and p-nitrophenyl sulfate (PNS) as donor substrates with phenol as the acceptor substrate. Cannot use 3'-phosphoadenosine-5'-phophosulfate (PAPS), the donor substrate of mammalian sulfotransferase. This is Arylsulfate sulfotransferase AssT from Escherichia coli O6:H1 (strain CFT073 / ATCC 700928 / UPEC).